Reading from the N-terminus, the 70-residue chain is NAD(P)H-quinone oxidoreductase subunit O (70 aa).

Belongs to the complex I NdhO subunit family. NDH-1 can be composed of about 15 different subunits; different subcomplexes with different compositions have been identified which probably have different functions.

Its subcellular location is the cellular thylakoid membrane. It catalyses the reaction a plastoquinone + NADH + (n+1) H(+)(in) = a plastoquinol + NAD(+) + n H(+)(out). It carries out the reaction a plastoquinone + NADPH + (n+1) H(+)(in) = a plastoquinol + NADP(+) + n H(+)(out). In terms of biological role, NDH-1 shuttles electrons from an unknown electron donor, via FMN and iron-sulfur (Fe-S) centers, to quinones in the respiratory and/or the photosynthetic chain. The immediate electron acceptor for the enzyme in this species is believed to be plastoquinone. Couples the redox reaction to proton translocation, and thus conserves the redox energy in a proton gradient. Cyanobacterial NDH-1 also plays a role in inorganic carbon-concentration. The sequence is that of NAD(P)H-quinone oxidoreductase subunit O from Trichormus variabilis (strain ATCC 29413 / PCC 7937) (Anabaena variabilis).